Reading from the N-terminus, the 159-residue chain is Ribosomal RNA large subunit methyltransferase H (159 aa).

S-adenosyl-L-methionine is bound by residues Leu76, Gly108, and 127–132 (FGLLTL).

Belongs to the RNA methyltransferase RlmH family. Homodimer.

The protein resides in the cytoplasm. It carries out the reaction pseudouridine(1915) in 23S rRNA + S-adenosyl-L-methionine = N(3)-methylpseudouridine(1915) in 23S rRNA + S-adenosyl-L-homocysteine + H(+). Functionally, specifically methylates the pseudouridine at position 1915 (m3Psi1915) in 23S rRNA. The chain is Ribosomal RNA large subunit methyltransferase H from Streptococcus equi subsp. zooepidemicus (strain MGCS10565).